Here is a 155-residue protein sequence, read N- to C-terminus: Ribosomal RNA large subunit methyltransferase H (155 aa).

Residues Gly104 and 123–128 (LGPMTF) each bind S-adenosyl-L-methionine.

This sequence belongs to the RNA methyltransferase RlmH family. In terms of assembly, homodimer.

Its subcellular location is the cytoplasm. The enzyme catalyses pseudouridine(1915) in 23S rRNA + S-adenosyl-L-methionine = N(3)-methylpseudouridine(1915) in 23S rRNA + S-adenosyl-L-homocysteine + H(+). In terms of biological role, specifically methylates the pseudouridine at position 1915 (m3Psi1915) in 23S rRNA. This is Ribosomal RNA large subunit methyltransferase H from Nitratidesulfovibrio vulgaris (strain DSM 19637 / Miyazaki F) (Desulfovibrio vulgaris).